An 897-amino-acid polypeptide reads, in one-letter code: N-terminal acetyltransferase A complex auxiliary subunit NAA15 (897 aa).

7 TPR repeats span residues 77–110, 111–144, 189–222, 223–256, 298–331, 380–413, and 488–523; these read HVCW…DPDN, LEIL…KPNH, TEMI…IVDK, LSYK…NPDN, SSAV…KGVP, LWTL…TPTV, and QCMW…YADI. 2 disordered regions span residues 578-640 and 863-897; these read KSTA…DPHG and SRKS…SVAT. Positions 602–617 are enriched in basic and acidic residues; it reads KAEARAKKEAESKSEE. The segment covering 863-872 has biased composition (polar residues); that stretch reads SRKSNENGDT.

In terms of assembly, part of the NatA complex. Associates with ribosomes. Interacts with NAA10. As to expression, expressed in leaves, roots, shoots and flowers.

In terms of biological role, auxiliary subunit of the NatA N-alpha-acetyltransferase complex. Required for male gametocyte development, embryogenesis, suspensor development and the formation of the quiescent center (QC) in the root meristem. Involved in plant immunity through the regulation of SNC1 stability. Required for embryo development. The polypeptide is N-terminal acetyltransferase A complex auxiliary subunit NAA15 (Arabidopsis thaliana (Mouse-ear cress)).